The sequence spans 187 residues: POM121 and ZP3 fusion protein (187 aa).

Residues 166–187 (GTPSHSRRQPRVVSQWSTSASL) form a disordered region. Over residues 177–187 (VVSQWSTSASL) the composition is skewed to polar residues.

Expressed in spleen, thymus, pancreas, testis, ovary, small intestine, colon and lymphocytes.

The polypeptide is POM121 and ZP3 fusion protein (POMZP3) (Homo sapiens (Human)).